The sequence spans 227 residues: Fibrillarin-like rRNA/tRNA 2'-O-methyltransferase (227 aa).

Residues 86 to 87 (TT), 105 to 106 (EF), 130 to 131 (DA), and 150 to 153 (DVAQ) contribute to the S-adenosyl-L-methionine site.

It belongs to the methyltransferase superfamily. Fibrillarin family. In terms of assembly, interacts with nop5. Component of box C/D small ribonucleoprotein (sRNP) particles that contain rpl7ae, FlpA and nop5, plus a guide RNA.

Its function is as follows. Involved in pre-rRNA and tRNA processing. Utilizes the methyl donor S-adenosyl-L-methionine to catalyze the site-specific 2'-hydroxyl methylation of ribose moieties in rRNA and tRNA. Site specificity is provided by a guide RNA that base pairs with the substrate. Methylation occurs at a characteristic distance from the sequence involved in base pairing with the guide RNA. The protein is Fibrillarin-like rRNA/tRNA 2'-O-methyltransferase of Pyrococcus horikoshii (strain ATCC 700860 / DSM 12428 / JCM 9974 / NBRC 100139 / OT-3).